The chain runs to 890 residues: Alanine--tRNA ligase (890 aa).

Zn(2+) contacts are provided by H569, H573, C671, and H675.

This sequence belongs to the class-II aminoacyl-tRNA synthetase family. It depends on Zn(2+) as a cofactor.

The protein resides in the cytoplasm. It catalyses the reaction tRNA(Ala) + L-alanine + ATP = L-alanyl-tRNA(Ala) + AMP + diphosphate. Its function is as follows. Catalyzes the attachment of alanine to tRNA(Ala) in a two-step reaction: alanine is first activated by ATP to form Ala-AMP and then transferred to the acceptor end of tRNA(Ala). Also edits incorrectly charged Ser-tRNA(Ala) and Gly-tRNA(Ala) via its editing domain. The polypeptide is Alanine--tRNA ligase (Synechococcus sp. (strain CC9902)).